The primary structure comprises 353 residues: uncharacterized protein (353 aa).

5 residues coordinate Mn(2+): Asp212, Asp223, His287, Glu316, and Glu330.

It belongs to the peptidase M24B family. Requires Mn(2+) as cofactor.

This is an uncharacterized protein from Bacillus subtilis (strain 168).